We begin with the raw amino-acid sequence, 94 residues long: Protein canopy homolog 1 (94 aa).

The protein belongs to the canopy family.

This chain is Protein canopy homolog 1 (Cnpy1), found in Mus musculus (Mouse).